A 1114-amino-acid polypeptide reads, in one-letter code: Proto-oncogene tyrosine-protein kinase receptor Ret (1114 aa).

Positions 1 to 28 (MAKATSGAAGLRLLLLLLLPLLGKVALG) are cleaved as a signal peptide. Residues 29 to 153 (LYFSRDAYWE…RVYFSFFNTS (125 aa)) form a cadherin-like region 1 (CLD1) region. The Extracellular portion of the chain corresponds to 29–635 (LYFSRDAYWE…QDPLCDELCR (607 aa)). N-linked (GlcNAc...) asparagine glycosylation is present at Asn98. A disulfide bond links Cys137 and Cys142. Residue Asn151 is glycosylated (N-linked (GlcNAc...) asparagine). Intrachain disulfides connect Cys157-Cys197 and Cys166-Cys243. The 105-residue stretch at 168–272 (PETRPSFRIR…YDEDDSAPTF (105 aa)) folds into the Cadherin domain. 2 residues coordinate Ca(2+): Glu178 and Asn179. An N-linked (GlcNAc...) asparagine glycan is attached at Asn199. The Ca(2+) site is built by Asp230, Glu232, Asp264, Glu265, Asp266, Asp267, Ser268, Asp300, and Asp302. Residues 265-379 (EDDSAPTFPA…MQLAVLVNDS (115 aa)) are cadherin-like region 3 (CLD3). N-linked (GlcNAc...) asparagine glycans are attached at residues Asn336, Asn343, Asn361, Asn367, and Asn377. Ca(2+) is bound at residue Asp378. Asn394 carries an N-linked (GlcNAc...) asparagine glycan. Positions 405–506 (PSTYSLSVSR…QAQLLVTVEG (102 aa)) are cadherin-like region 4 (CLD4). A disulfide bridge links Cys426 with Cys430. 2 N-linked (GlcNAc...) asparagine glycosylation sites follow: Asn448 and Asn468. Cystine bridges form between Cys449–Cys478, Cys515–Cys531, Cys519–Cys541, and Cys528–Cys558. N-linked (GlcNAc...) asparagine glycosylation is present at Asn554. Thr564, Cys565, Asp567, His569, Glu574, and Asp584 together coordinate Ca(2+). 5 disulfide bridges follow: Cys565–Cys581, Cys570–Cys585, Cys609–Cys620, Cys611–Cys618, and Cys630–Cys634. A helical transmembrane segment spans residues 636 to 657 (TVIAAAVLFSFIVSVLLSAFCI). Residues 658–1114 (HCYHKFAHKP…AAKLMDTFDS (457 aa)) are Cytoplasmic-facing. A Phosphotyrosine; by autocatalysis modification is found at Tyr687. Ser688 carries O-linked (GlcNAc) serine glycosylation. Ser696 is subject to Phosphoserine. The Protein kinase domain occupies 724-1016 (LVLGKTLGEG…KMMVKRRDYL (293 aa)). ATP-binding positions include 730–738 (LGEGEFGKV) and Lys758. 805 to 807 (EYA) is a binding site for semaxanib. Residues Tyr806, Tyr809, and Tyr826 each carry the phosphotyrosine; by autocatalysis modification. The active-site Proton acceptor is the Asp874. 8 positions are modified to phosphotyrosine; by autocatalysis: Tyr900, Tyr905, Tyr981, Tyr1015, Tyr1029, Tyr1062, Tyr1090, and Tyr1096.

Belongs to the protein kinase superfamily. Tyr protein kinase family. In terms of assembly, phosphorylated form interacts with the PBT domain of DOK2, DOK4 and DOK5. The phosphorylated form interacts with PLCG1 and GRB7. Interacts (not phosphorylated) with PTK2/FAK1 (via FERM domain). Extracellular cell-membrane anchored RET cadherin fragments form complex in neurons with reduced trophic status, preferentially at the contact sites between somas. Interacts with AIP in the pituitary gland; this interaction prevents the formation of the AIP-survivin complex. Interacts (inactive) with CBLC and CD2AP; dissociates upon activation by GDNF which increases CBLC:CD2AP interaction. The cofactor is Ca(2+). Autophosphorylated on C-terminal tyrosine residues upon ligand stimulation. In terms of processing, proteolytically cleaved by caspase-3. The soluble RET kinase fragment is able to induce cell death. The extracellular cell-membrane anchored RET cadherin fragment accelerates cell adhesion in sympathetic neurons.

Its subcellular location is the cell membrane. It localises to the endosome membrane. It catalyses the reaction L-tyrosyl-[protein] + ATP = O-phospho-L-tyrosyl-[protein] + ADP + H(+). Its activity is regulated as follows. Repressed by 4-(3-hydroxyanilino)-quinolines derivatives, indolin-2-one-derivatives, 2-(alkylsulfanyl)-4-(3-thienyl) nicotinonitrile analogs, 3- and 4-substituted beta-carbolin-1-ones, vandetanib, motesanib, sorafenib (BAY 43-9006), cabozantinib (XL184), lenvatinib, sunitinib, nintedanib, and withaferin A (WA). Inactivation by sorafenib both reduces kinase activity and promotes lysosomal degradation. Functionally, receptor tyrosine-protein kinase involved in numerous cellular mechanisms including cell proliferation, neuronal navigation, cell migration, and cell differentiation in response to glia cell line-derived growth family factors (GDNF, NRTN, ARTN, PSPN and GDF15). In contrast to most receptor tyrosine kinases, RET requires not only its cognate ligands but also coreceptors, for activation. GDNF ligands (GDNF, NRTN, ARTN, PSPN and GDF15) first bind their corresponding GDNFR coreceptors (GFRA1, GFRA2, GFRA3, GFRA4 and GFRAL, respectively), triggering RET autophosphorylation and activation, leading to activation of downstream signaling pathways, including the MAPK- and AKT-signaling pathways. Acts as a dependence receptor via the GDNF-GFRA1 signaling: in the presence of the ligand GDNF in somatotrophs within pituitary, promotes survival and down regulates growth hormone (GH) production, but triggers apoptosis in absence of GDNF. Required for the molecular mechanisms orchestration during intestine organogenesis via the ARTN-GFRA3 signaling: involved in the development of enteric nervous system and renal organogenesis during embryonic life, and promotes the formation of Peyer's patch-like structures, a major component of the gut-associated lymphoid tissue. Mediates, through interaction with GDF15-receptor GFRAL, GDF15-induced cell-signaling in the brainstem which triggers an aversive response, characterized by nausea, vomiting, and/or loss of appetite in response to various stresses. Modulates cell adhesion via its cleavage by caspase in sympathetic neurons and mediates cell migration in an integrin (e.g. ITGB1 and ITGB3)-dependent manner. Also active in the absence of ligand, triggering apoptosis through a mechanism that requires receptor intracellular caspase cleavage. Triggers the differentiation of rapidly adapting (RA) mechanoreceptors. Involved in the development of the neural crest. Regulates nociceptor survival and size. Phosphorylates PTK2/FAK1. Isoform 1 in complex with GFRAL induces higher activation of MAPK-signaling pathway than isoform 2 in complex with GFRAL. This chain is Proto-oncogene tyrosine-protein kinase receptor Ret, found in Homo sapiens (Human).